The following is a 40-amino-acid chain: Adenylate kinase (40 aa).

Position 10 to 15 (10 to 15 (GAGKGT)) interacts with ATP. Residues 30-40 (STGDMFIKAIK) form an NMP region. AMP is bound at residue T31.

This sequence belongs to the adenylate kinase family. In terms of assembly, monomer.

It is found in the cytoplasm. It catalyses the reaction AMP + ATP = 2 ADP. It functions in the pathway purine metabolism; AMP biosynthesis via salvage pathway; AMP from ADP: step 1/1. Its function is as follows. Catalyzes the reversible transfer of the terminal phosphate group between ATP and AMP. Plays an important role in cellular energy homeostasis and in adenine nucleotide metabolism. The polypeptide is Adenylate kinase (adk) (Staphylococcus carnosus).